We begin with the raw amino-acid sequence, 112 residues long: Large ribosomal subunit protein mL53 (112 aa).

The protein belongs to the mitochondrion-specific ribosomal protein mL53 family. As to quaternary structure, component of the mitochondrial ribosome large subunit (39S) which comprises a 16S rRNA and about 50 distinct proteins.

It localises to the mitochondrion. In Pongo abelii (Sumatran orangutan), this protein is Large ribosomal subunit protein mL53 (MRPL53).